Consider the following 549-residue polypeptide: Frizzled/smoothened-like sans CRD protein A (549 aa).

The N-terminal stretch at 1–22 (MKFNFKLILIILIINQILIINC) is a signal peptide. The Extracellular portion of the chain corresponds to 23-89 (KENKILEIYK…EVNTLSLMIK (67 aa)). The N-linked (GlcNAc...) asparagine glycan is linked to Asn63. Residues 90 to 110 (ITGTISFIASLILLLIYSPLI) form a helical membrane-spanning segment. Over 111 to 119 (NRMGYNRHT) the chain is Cytoplasmic. Residues 120 to 140 (IGIFFLTFSVFLIMLTDIIYV) traverse the membrane as a helical segment. The Extracellular segment spans residues 141-162 (HHGNDLICPQSHRYSRQNDSGC). Residue Asn158 is glycosylated (N-linked (GlcNAc...) asparagine). Residues 163-183 (TITGILFQYGCIAAVLFWATL) traverse the membrane as a helical segment. The Cytoplasmic portion of the chain corresponds to 184-198 (SLDLYLTLKKISTKK). The chain crosses the membrane as a helical span at residues 199–219 (VEKWYLIILTLIALILTFVPL). The Extracellular portion of the chain corresponds to 220-241 (VKKSYGYLVTGLACWILDSTDQ). Residues 242-262 (IIFFWAPFTAILGIGSILIVL) form a helical membrane-spanning segment. At 263–287 (VVYEIYKISKITKQNRGIFQSHIRP) the chain is on the cytoplasmic side. The helical transmembrane segment at 288–308 (LLMVLFIFGQFLFILAFNALI) threads the bilayer. Over 309–346 (NNKYDEYSARMDSYIDCLFSSSSYSYLCRLKTFPFEME) the chain is Extracellular. The chain crosses the membrane as a helical span at residues 347–367 (FIVLFFLRLIGIEVLIFYGFT). Residues 368-549 (QQTKKILLHS…NNNSNNDENN (182 aa)) lie on the Cytoplasmic side of the membrane. 2 stretches are compositionally biased toward low complexity: residues 417–474 (NNNN…SQQN) and 536–549 (NKNI…DENN). Disordered stretches follow at residues 417 to 483 (NNNN…QKLS) and 528 to 549 (QYEE…DENN). The stretch at 432–475 (NNLNNNLNNNNLNNNNNLNNLNNLNINNNLKNSQNNLNNSQQNE) forms a coiled coil.

Belongs to the G-protein coupled receptor Fz/Smo family.

It is found in the membrane. This is Frizzled/smoothened-like sans CRD protein A (fscA) from Dictyostelium discoideum (Social amoeba).